We begin with the raw amino-acid sequence, 401 residues long: Lipoyl synthase 1, mitochondrial (401 aa).

Residues 1-25 (MWSSSSSLCRNPSFRRAWLSTVTVT) constitute a mitochondrion transit peptide. Positions 49–79 (IDDFSSTNAPTTTTHYTSSNGSPIVRQKAAP) are disordered. Residues 51–70 (DFSSTNAPTTTTHYTSSNGS) are compositionally biased toward polar residues. Residues Cys117, Cys122, Cys128, Cys148, Cys152, Cys155, and Ser376 each coordinate [4Fe-4S] cluster. In terms of domain architecture, Radical SAM core spans 133 to 365 (EDQTATATIM…QETAMGMGFA (233 aa)).

This sequence belongs to the radical SAM superfamily. Lipoyl synthase family. The cofactor is [4Fe-4S] cluster.

Its subcellular location is the mitochondrion. It catalyses the reaction [[Fe-S] cluster scaffold protein carrying a second [4Fe-4S](2+) cluster] + N(6)-octanoyl-L-lysyl-[protein] + 2 oxidized [2Fe-2S]-[ferredoxin] + 2 S-adenosyl-L-methionine + 4 H(+) = [[Fe-S] cluster scaffold protein] + N(6)-[(R)-dihydrolipoyl]-L-lysyl-[protein] + 4 Fe(3+) + 2 hydrogen sulfide + 2 5'-deoxyadenosine + 2 L-methionine + 2 reduced [2Fe-2S]-[ferredoxin]. It participates in protein modification; protein lipoylation via endogenous pathway; protein N(6)-(lipoyl)lysine from octanoyl-[acyl-carrier-protein]: step 2/2. Functionally, catalyzes the radical-mediated insertion of two sulfur atoms into the C-6 and C-8 positions of the octanoyl moiety bound to the lipoyl domains of lipoate-dependent enzymes, thereby converting the octanoylated domains into lipoylated derivatives. This Phaeodactylum tricornutum (strain CCAP 1055/1) protein is Lipoyl synthase 1, mitochondrial.